The sequence spans 347 residues: Holliday junction branch migration complex subunit RuvB (347 aa).

Positions 1-186 (MKDENSINFL…FGITARFELY (186 aa)) are large ATPase domain (RuvB-L). Residues Leu25, Arg26, Gly67, Lys70, Thr71, Thr72, 133-135 (EDY), Arg176, Tyr186, and Arg223 each bind ATP. Residue Thr71 coordinates Mg(2+). The interval 187-257 (SEIELVEIIK…IVAIGLEMLR (71 aa)) is small ATPAse domain (RuvB-S). The interval 260 to 347 (GEGLDEQDRN…NLNENQRVSF (88 aa)) is head domain (RuvB-H). DNA is bound by residues Arg315 and Arg320.

This sequence belongs to the RuvB family. Homohexamer. Forms an RuvA(8)-RuvB(12)-Holliday junction (HJ) complex. HJ DNA is sandwiched between 2 RuvA tetramers; dsDNA enters through RuvA and exits via RuvB. An RuvB hexamer assembles on each DNA strand where it exits the tetramer. Each RuvB hexamer is contacted by two RuvA subunits (via domain III) on 2 adjacent RuvB subunits; this complex drives branch migration. In the full resolvosome a probable DNA-RuvA(4)-RuvB(12)-RuvC(2) complex forms which resolves the HJ.

The protein resides in the cytoplasm. The enzyme catalyses ATP + H2O = ADP + phosphate + H(+). Functionally, the RuvA-RuvB-RuvC complex processes Holliday junction (HJ) DNA during genetic recombination and DNA repair, while the RuvA-RuvB complex plays an important role in the rescue of blocked DNA replication forks via replication fork reversal (RFR). RuvA specifically binds to HJ cruciform DNA, conferring on it an open structure. The RuvB hexamer acts as an ATP-dependent pump, pulling dsDNA into and through the RuvAB complex. RuvB forms 2 homohexamers on either side of HJ DNA bound by 1 or 2 RuvA tetramers; 4 subunits per hexamer contact DNA at a time. Coordinated motions by a converter formed by DNA-disengaged RuvB subunits stimulates ATP hydrolysis and nucleotide exchange. Immobilization of the converter enables RuvB to convert the ATP-contained energy into a lever motion, pulling 2 nucleotides of DNA out of the RuvA tetramer per ATP hydrolyzed, thus driving DNA branch migration. The RuvB motors rotate together with the DNA substrate, which together with the progressing nucleotide cycle form the mechanistic basis for DNA recombination by continuous HJ branch migration. Branch migration allows RuvC to scan DNA until it finds its consensus sequence, where it cleaves and resolves cruciform DNA. The polypeptide is Holliday junction branch migration complex subunit RuvB (Borreliella afzelii (strain PKo) (Borrelia afzelii)).